We begin with the raw amino-acid sequence, 78 residues long: Large ribosomal subunit protein bL28 (78 aa).

Belongs to the bacterial ribosomal protein bL28 family.

This is Large ribosomal subunit protein bL28 from Synechococcus sp. (strain ATCC 27144 / PCC 6301 / SAUG 1402/1) (Anacystis nidulans).